A 61-amino-acid polypeptide reads, in one-letter code: Small ribosomal subunit protein uS14 (61 aa).

Zn(2+)-binding residues include C24, C27, C40, and C43.

This sequence belongs to the universal ribosomal protein uS14 family. Zinc-binding uS14 subfamily. As to quaternary structure, part of the 30S ribosomal subunit. Contacts proteins S3 and S10. The cofactor is Zn(2+).

Binds 16S rRNA, required for the assembly of 30S particles and may also be responsible for determining the conformation of the 16S rRNA at the A site. The sequence is that of Small ribosomal subunit protein uS14 from Campylobacter fetus subsp. fetus (strain 82-40).